We begin with the raw amino-acid sequence, 179 residues long: Large ribosomal subunit protein bL17 (179 aa).

Basic and acidic residues predominate over residues Lys-123 to Thr-161. Positions Lys-123–Ser-179 are disordered. Over residues Asp-162 to Arg-171 the composition is skewed to polar residues.

Belongs to the bacterial ribosomal protein bL17 family. As to quaternary structure, part of the 50S ribosomal subunit. Contacts protein L32.

The sequence is that of Large ribosomal subunit protein bL17 from Treponema denticola (strain ATCC 35405 / DSM 14222 / CIP 103919 / JCM 8153 / KCTC 15104).